We begin with the raw amino-acid sequence, 435 residues long: 5-methylthioadenosine/S-adenosylhomocysteine deaminase (435 aa).

Residues His65 and His67 each coordinate Zn(2+). 3 residues coordinate substrate: Glu94, Arg150, and His189. A Zn(2+)-binding site is contributed by His216. Substrate contacts are provided by Glu219 and Asp304. Zn(2+) is bound at residue Asp304.

Belongs to the metallo-dependent hydrolases superfamily. MTA/SAH deaminase family. Zn(2+) is required as a cofactor.

It carries out the reaction S-adenosyl-L-homocysteine + H2O + H(+) = S-inosyl-L-homocysteine + NH4(+). The catalysed reaction is S-methyl-5'-thioadenosine + H2O + H(+) = S-methyl-5'-thioinosine + NH4(+). In terms of biological role, catalyzes the deamination of 5-methylthioadenosine and S-adenosyl-L-homocysteine into 5-methylthioinosine and S-inosyl-L-homocysteine, respectively. Is also able to deaminate adenosine. The polypeptide is 5-methylthioadenosine/S-adenosylhomocysteine deaminase (Bacillus cereus (strain ATCC 14579 / DSM 31 / CCUG 7414 / JCM 2152 / NBRC 15305 / NCIMB 9373 / NCTC 2599 / NRRL B-3711)).